The sequence spans 114 residues: Macrophage migration inhibitory factor homolog (114 aa).

Catalysis depends on Pro2, which acts as the Proton acceptor; via imino nitrogen. Substrate is bound by residues Lys33 and Ile65.

This sequence belongs to the MIF family.

The protein resides in the secreted. The catalysed reaction is L-dopachrome = 5,6-dihydroxyindole-2-carboxylate. It catalyses the reaction 3-phenylpyruvate = enol-phenylpyruvate. In terms of biological role, tautomerization of the methyl ester of L-dopachrome. Inhibits migration of human peripheral blood mononuclear cells. The sequence is that of Macrophage migration inhibitory factor homolog from Trichinella spiralis (Trichina worm).